A 289-amino-acid chain; its full sequence is Phospholipase A1 (289 aa).

Residues 1–20 (MRTGPGWLLAAAALPFFACA) form the signal peptide. Topologically, residues 21–52 (QEATIDKVHDTPAVRGSIIANMLQEHDNPFTL) are periplasmic. The beta stranded transmembrane segment at 53–65 (YPYESNYLLYTYT) threads the bilayer. Residues 66–84 (SDLNKKAIESYNWSDNANK) lie on the Extracellular side of the membrane. Residues 85-99 (DEVKFQLSLAFPLWR) form a beta stranded membrane-spanning segment. Residues 100–105 (GILGDN) are Periplasmic-facing. Residues 106-118 (SLLGASYTQRSWW) traverse the membrane as a beta stranded segment. The Extracellular portion of the chain corresponds to 119–128 (QLSNTGESAP). Ser-126 is a Ca(2+) binding site. A beta stranded membrane pass occupies residues 129-148 (FRETNYEPQLFLGFATDYSV). Topologically, residues 149 to 150 (GD) are periplasmic. The beta stranded transmembrane segment at 151–164 (WTLRDAEFGYNHQS) threads the bilayer. His-162 serves as the catalytic Proton acceptor. Residue Ser-164 is the Nucleophile of the active site. Topologically, residues 165-173 (NGRSDPTSR) are extracellular. The Ca(2+) site is built by Arg-167 and Ser-172. The beta stranded transmembrane segment at 174-186 (SWNRLYSRLMAQN) threads the bilayer. The Periplasmic portion of the chain corresponds to 187–188 (GN). Residues 189–198 (WLVEVKPWYV) traverse the membrane as a beta stranded segment. Over 199 to 216 (IGDTSDNKNITKYMGYYQ) the chain is Extracellular. Position 204 (Asp-204) interacts with Ca(2+). The chain crosses the membrane as a beta stranded span at residues 217–223 (LKIGYQL). Topologically, residues 224-225 (GE) are periplasmic. Residues 226–234 (AVLSAKGQY) traverse the membrane as a beta stranded segment. Over 235-241 (NWNTGYG) the chain is Extracellular. The chain crosses the membrane as a beta stranded span at residues 242–250 (GAELGVSYP). Over 251–255 (ITKHV) the chain is Periplasmic. The chain crosses the membrane as a beta stranded span at residues 256 to 265 (RFYTQVYSGY). The Extracellular portion of the chain corresponds to 266-274 (GESLIDYDF). A beta stranded transmembrane segment spans residues 275–286 (NQTRVGMGVMLN). Over 287-289 (DLF) the chain is Periplasmic.

The protein belongs to the phospholipase A1 family. As to quaternary structure, homodimer; dimerization is reversible, and the dimeric form is the active one. The cofactor is Ca(2+).

It localises to the cell outer membrane. The enzyme catalyses a 1,2-diacyl-sn-glycero-3-phosphocholine + H2O = a 2-acyl-sn-glycero-3-phosphocholine + a fatty acid + H(+). It catalyses the reaction a 1,2-diacyl-sn-glycero-3-phosphocholine + H2O = a 1-acyl-sn-glycero-3-phosphocholine + a fatty acid + H(+). Functionally, hydrolysis of phosphatidylcholine with phospholipase A2 (EC 3.1.1.4) and phospholipase A1 (EC 3.1.1.32) activities. The protein is Phospholipase A1 (pldA) of Proteus vulgaris.